The chain runs to 472 residues: Ras-GEF domain-containing family member 1B (472 aa).

Residues 34–164 (QDNNLLSGSL…IIQNLIRKLA (131 aa)) enclose the N-terminal Ras-GEF domain. The 249-residue stretch at 204–452 (DPYTVAQQLT…YLASYESEGP (249 aa)) folds into the Ras-GEF domain.

Functionally, guanine nucleotide exchange factor (GEF) with specificity for rap2a and other Ras family proteins (in vitro). The polypeptide is Ras-GEF domain-containing family member 1B (rasgef1b) (Xenopus tropicalis (Western clawed frog)).